The following is a 403-amino-acid chain: Histidine--tRNA ligase (403 aa).

It belongs to the class-II aminoacyl-tRNA synthetase family. As to quaternary structure, homodimer.

It is found in the cytoplasm. The enzyme catalyses tRNA(His) + L-histidine + ATP = L-histidyl-tRNA(His) + AMP + diphosphate + H(+). The sequence is that of Histidine--tRNA ligase (hisS) from Aquifex aeolicus (strain VF5).